Here is a 193-residue protein sequence, read N- to C-terminus: Peptidyl-tRNA hydrolase (193 aa).

Residue tyrosine 16 coordinates tRNA. Catalysis depends on histidine 21, which acts as the Proton acceptor. Residues phenylalanine 66, asparagine 68, and asparagine 114 each contribute to the tRNA site.

This sequence belongs to the PTH family. Monomer.

The protein localises to the cytoplasm. The enzyme catalyses an N-acyl-L-alpha-aminoacyl-tRNA + H2O = an N-acyl-L-amino acid + a tRNA + H(+). Its function is as follows. Hydrolyzes ribosome-free peptidyl-tRNAs (with 1 or more amino acids incorporated), which drop off the ribosome during protein synthesis, or as a result of ribosome stalling. Functionally, catalyzes the release of premature peptidyl moieties from peptidyl-tRNA molecules trapped in stalled 50S ribosomal subunits, and thus maintains levels of free tRNAs and 50S ribosomes. The polypeptide is Peptidyl-tRNA hydrolase (Trichlorobacter lovleyi (strain ATCC BAA-1151 / DSM 17278 / SZ) (Geobacter lovleyi)).